The primary structure comprises 759 residues: Phosphoribosylformylglycinamidine synthase subunit PurL (759 aa).

Histidine 61 is a catalytic residue. ATP-binding residues include tyrosine 64 and lysine 105. Glutamate 107 contributes to the Mg(2+) binding site. Substrate is bound by residues 108-111 (SHNH) and arginine 130. Histidine 109 functions as the Proton acceptor in the catalytic mechanism. Aspartate 131 lines the Mg(2+) pocket. Glutamine 260 provides a ligand contact to substrate. A Mg(2+)-binding site is contributed by aspartate 288. 332 to 334 (ESQ) is a substrate binding site. The ATP site is built by aspartate 520 and glycine 557. Mg(2+) is bound at residue asparagine 558. A substrate-binding site is contributed by serine 560.

It belongs to the FGAMS family. As to quaternary structure, monomer. Part of the FGAM synthase complex composed of 1 PurL, 1 PurQ and 2 PurS subunits.

It localises to the cytoplasm. It carries out the reaction N(2)-formyl-N(1)-(5-phospho-beta-D-ribosyl)glycinamide + L-glutamine + ATP + H2O = 2-formamido-N(1)-(5-O-phospho-beta-D-ribosyl)acetamidine + L-glutamate + ADP + phosphate + H(+). Its pathway is purine metabolism; IMP biosynthesis via de novo pathway; 5-amino-1-(5-phospho-D-ribosyl)imidazole from N(2)-formyl-N(1)-(5-phospho-D-ribosyl)glycinamide: step 1/2. Its function is as follows. Part of the phosphoribosylformylglycinamidine synthase complex involved in the purines biosynthetic pathway. Catalyzes the ATP-dependent conversion of formylglycinamide ribonucleotide (FGAR) and glutamine to yield formylglycinamidine ribonucleotide (FGAM) and glutamate. The FGAM synthase complex is composed of three subunits. PurQ produces an ammonia molecule by converting glutamine to glutamate. PurL transfers the ammonia molecule to FGAR to form FGAM in an ATP-dependent manner. PurS interacts with PurQ and PurL and is thought to assist in the transfer of the ammonia molecule from PurQ to PurL. This chain is Phosphoribosylformylglycinamidine synthase subunit PurL, found in Thermoplasma volcanium (strain ATCC 51530 / DSM 4299 / JCM 9571 / NBRC 15438 / GSS1).